The primary structure comprises 425 residues: 2-methylserine hydroxymethyltransferase (425 aa).

Residues Leu126 and 130-132 (GHL) contribute to the (6S)-5,6,7,8-tetrahydrofolate site. Residue Lys235 is modified to N6-(pyridoxal phosphate)lysine.

Belongs to the SHMT family. In terms of assembly, homodimer. Pyridoxal 5'-phosphate serves as cofactor.

It is found in the cytoplasm. It carries out the reaction (6R)-5,10-methylene-5,6,7,8-tetrahydrofolate + D-alanine + H2O = 2-methylserine + (6S)-5,6,7,8-tetrahydrofolate. The protein operates within one-carbon metabolism; tetrahydrofolate interconversion. Functionally, catalyzes the reversible interconversion of alpha-methyl-L-serine to D-alanine with tetrahydrofolate (THF) serving as the one-carbon carrier. Cannot use alpha-methyl-D-serine, L-serine, D-serine or L-alanine. In Aminobacter sp, this protein is 2-methylserine hydroxymethyltransferase.